The chain runs to 64 residues: UPF0337 protein SAB0772 (64 aa).

The segment at 1–40 is disordered; the sequence is MADESKFEQAKGNVKETIGNVTDNKNLENEGKEDKASGKA. Positions 25–40 are enriched in basic and acidic residues; that stretch reads KNLENEGKEDKASGKA.

This sequence belongs to the UPF0337 (CsbD) family.

This is UPF0337 protein SAB0772 from Staphylococcus aureus (strain bovine RF122 / ET3-1).